A 530-amino-acid polypeptide reads, in one-letter code: Probable NADH-specific resorcinol 4-hydroxylase (530 aa).

It catalyses the reaction resorcinol + NADH + O2 + H(+) = benzene-1,2,4-triol + NAD(+) + H2O. Functionally, single-component hydroxylase that is part of the gamma-resorcylate (GRA) degradation pathway. GRA is initially converted by GRA decarboxylase to resorcinol, which is hydroxylated by resorcinol 4-hydroxylase. In Rhodococcus jostii (strain RHA1), this protein is Probable NADH-specific resorcinol 4-hydroxylase (tsdB).